The primary structure comprises 460 residues: Argininosuccinate lyase (460 aa).

This sequence belongs to the lyase 1 family. Argininosuccinate lyase subfamily.

The protein resides in the cytoplasm. The catalysed reaction is 2-(N(omega)-L-arginino)succinate = fumarate + L-arginine. It functions in the pathway amino-acid biosynthesis; L-arginine biosynthesis; L-arginine from L-ornithine and carbamoyl phosphate: step 3/3. This is Argininosuccinate lyase from Oleidesulfovibrio alaskensis (strain ATCC BAA-1058 / DSM 17464 / G20) (Desulfovibrio alaskensis).